Consider the following 298-residue polypeptide: Glutamate/glycine mitochondrial carrier ymc1 (298 aa).

Solcar repeat units lie at residues 14–98, 106–193, and 206–294; these read TKDF…CKRF, VTMP…LVKN, and TPGW…VSQH. 6 helical membrane passes run 17–37, 67–87, 112–132, 172–192, 212–232, and 266–287; these read FLAG…FDCV, LAAF…CVSI, YVSG…VEHV, TAAR…ALVK, CVFG…FDIV, and FYRG…TFYV.

It belongs to the mitochondrial carrier (TC 2.A.29) family.

The protein localises to the mitochondrion inner membrane. Functionally, acts as a glutamate and glycine mitochondrial transmembrane transporter. The protein is Glutamate/glycine mitochondrial carrier ymc1 (ymc1) of Schizosaccharomyces pombe (strain 972 / ATCC 24843) (Fission yeast).